The following is a 434-amino-acid chain: 3-phosphoshikimate 1-carboxyvinyltransferase (434 aa).

Positions 22, 23, and 27 each coordinate 3-phosphoshikimate. Residue lysine 22 participates in phosphoenolpyruvate binding. The phosphoenolpyruvate site is built by glycine 93 and arginine 121. The 3-phosphoshikimate site is built by serine 168, serine 169, glutamine 170, serine 199, aspartate 320, and lysine 347. Residue glutamine 170 coordinates phosphoenolpyruvate. Catalysis depends on aspartate 320, which acts as the Proton acceptor. Arginine 351, arginine 395, and lysine 420 together coordinate phosphoenolpyruvate.

The protein belongs to the EPSP synthase family. As to quaternary structure, monomer.

Its subcellular location is the cytoplasm. The catalysed reaction is 3-phosphoshikimate + phosphoenolpyruvate = 5-O-(1-carboxyvinyl)-3-phosphoshikimate + phosphate. Its pathway is metabolic intermediate biosynthesis; chorismate biosynthesis; chorismate from D-erythrose 4-phosphate and phosphoenolpyruvate: step 6/7. Functionally, catalyzes the transfer of the enolpyruvyl moiety of phosphoenolpyruvate (PEP) to the 5-hydroxyl of shikimate-3-phosphate (S3P) to produce enolpyruvyl shikimate-3-phosphate and inorganic phosphate. The sequence is that of 3-phosphoshikimate 1-carboxyvinyltransferase from Cupriavidus taiwanensis (strain DSM 17343 / BCRC 17206 / CCUG 44338 / CIP 107171 / LMG 19424 / R1) (Ralstonia taiwanensis (strain LMG 19424)).